The following is a 456-amino-acid chain: PTS system sucrose-specific EIIBC component (456 aa).

The PTS EIIB type-1 domain occupies 4–87 (EQISRSLLPL…IQAAGISESS (84 aa)). Residue C26 is the Phosphocysteine intermediate; for EIIB activity of the active site. One can recognise a PTS EIIC type-1 domain in the interval 107–456 (RLLSNIFVPI…LTLKYKTDAE (350 aa)). The next 10 membrane-spanning stretches (helical) occupy residues 112 to 132 (IFVP…LLGM), 144 to 164 (ALYI…PILI), 181 to 201 (TLGG…AAGF), 209 to 229 (IEVA…AVWF), 247 to 267 (LILT…LLIG), 288 to 308 (AGWL…ITGI), 329 to 349 (FLLP…FAVW), 360 to 380 (ITLP…IFGI), 388 to 408 (FIAA…MHVY), and 428 to 448 (LLNY…LSLT).

The protein localises to the cell inner membrane. It catalyses the reaction N(pros)-phospho-L-histidyl-[protein](out) + sucrose = sucrose 6(G)-phosphate(in) + L-histidyl-[protein]. In terms of biological role, the phosphoenolpyruvate-dependent sugar phosphotransferase system (sugar PTS), a major carbohydrate active transport system, catalyzes the phosphorylation of incoming sugar substrates concomitantly with their translocation across the cell membrane. This system is involved in sucrose transport. The chain is PTS system sucrose-specific EIIBC component from Klebsiella pneumoniae.